The following is a 429-amino-acid chain: Enolase (429 aa).

Position 167 (Gln-167) interacts with (2R)-2-phosphoglycerate. Catalysis depends on Glu-209, which acts as the Proton donor. The Mg(2+) site is built by Asp-246, Glu-289, and Asp-316. 4 residues coordinate (2R)-2-phosphoglycerate: Lys-341, Arg-370, Ser-371, and Lys-392. Catalysis depends on Lys-341, which acts as the Proton acceptor.

Belongs to the enolase family. In terms of assembly, component of the RNA degradosome, a multiprotein complex involved in RNA processing and mRNA degradation. Mg(2+) serves as cofactor.

The protein resides in the cytoplasm. It is found in the secreted. It localises to the cell surface. The catalysed reaction is (2R)-2-phosphoglycerate = phosphoenolpyruvate + H2O. The protein operates within carbohydrate degradation; glycolysis; pyruvate from D-glyceraldehyde 3-phosphate: step 4/5. Catalyzes the reversible conversion of 2-phosphoglycerate (2-PG) into phosphoenolpyruvate (PEP). It is essential for the degradation of carbohydrates via glycolysis. In Pseudomonas fluorescens (strain ATCC BAA-477 / NRRL B-23932 / Pf-5), this protein is Enolase.